Reading from the N-terminus, the 213-residue chain is NADH-quinone oxidoreductase subunit B 1 (213 aa).

C82, C83, C148, and C177 together coordinate [4Fe-4S] cluster.

The protein belongs to the complex I 20 kDa subunit family. NDH-1 is composed of 14 different subunits. Subunits NuoB, C, D, E, F, and G constitute the peripheral sector of the complex. [4Fe-4S] cluster serves as cofactor.

Its subcellular location is the cell inner membrane. It carries out the reaction a quinone + NADH + 5 H(+)(in) = a quinol + NAD(+) + 4 H(+)(out). Functionally, NDH-1 shuttles electrons from NADH, via FMN and iron-sulfur (Fe-S) centers, to quinones in the respiratory chain. The immediate electron acceptor for the enzyme in this species is believed to be ubiquinone. Couples the redox reaction to proton translocation (for every two electrons transferred, four hydrogen ions are translocated across the cytoplasmic membrane), and thus conserves the redox energy in a proton gradient. This is NADH-quinone oxidoreductase subunit B 1 from Koribacter versatilis (strain Ellin345).